Reading from the N-terminus, the 182-residue chain is NADH-quinone oxidoreductase subunit B (182 aa).

The [4Fe-4S] cluster site is built by C46, C47, C112, and C141.

The protein belongs to the complex I 20 kDa subunit family. As to quaternary structure, NDH-1 is composed of 14 different subunits. Subunits NuoB, C, D, E, F, and G constitute the peripheral sector of the complex. [4Fe-4S] cluster is required as a cofactor.

The protein localises to the cell inner membrane. It catalyses the reaction a quinone + NADH + 5 H(+)(in) = a quinol + NAD(+) + 4 H(+)(out). Functionally, NDH-1 shuttles electrons from NADH, via FMN and iron-sulfur (Fe-S) centers, to quinones in the respiratory chain. The immediate electron acceptor for the enzyme in this species is believed to be a menaquinone. Couples the redox reaction to proton translocation (for every two electrons transferred, four hydrogen ions are translocated across the cytoplasmic membrane), and thus conserves the redox energy in a proton gradient. The chain is NADH-quinone oxidoreductase subunit B from Flavobacterium johnsoniae (strain ATCC 17061 / DSM 2064 / JCM 8514 / BCRC 14874 / CCUG 350202 / NBRC 14942 / NCIMB 11054 / UW101) (Cytophaga johnsonae).